A 485-amino-acid polypeptide reads, in one-letter code: Amidophosphoribosyltransferase, chloroplastic (485 aa).

The N-terminal 18 residues, 1 to 18 (KTTNTFASVNDDEKPREE), are a transit peptide targeting the chloroplast. The Nucleophile role is filled by cysteine 19. The region spanning 19–237 (CGVVGIYGDP…PGEVVVVDHT (219 aa)) is the Glutamine amidotransferase type-2 domain. Cysteine 253 contributes to the [4Fe-4S] cluster binding site. Residues serine 300, aspartate 362, and aspartate 363 each contribute to the Mg(2+) site. [4Fe-4S] cluster-binding residues include cysteine 399, cysteine 450, and cysteine 453.

It in the C-terminal section; belongs to the purine/pyrimidine phosphoribosyltransferase family. Mg(2+) is required as a cofactor. [4Fe-4S] cluster serves as cofactor.

Its subcellular location is the plastid. The protein localises to the chloroplast. It carries out the reaction 5-phospho-beta-D-ribosylamine + L-glutamate + diphosphate = 5-phospho-alpha-D-ribose 1-diphosphate + L-glutamine + H2O. The protein operates within purine metabolism; IMP biosynthesis via de novo pathway; N(1)-(5-phospho-D-ribosyl)glycinamide from 5-phospho-alpha-D-ribose 1-diphosphate: step 1/2. The sequence is that of Amidophosphoribosyltransferase, chloroplastic (PUR1) from Vigna aconitifolia (Moth bean).